The chain runs to 503 residues: UDP-N-acetylmuramoylalanine--D-glutamate ligase (503 aa).

129–135 lines the ATP pocket; that stretch reads GTNGKTT.

Belongs to the MurCDEF family.

The protein localises to the cytoplasm. The enzyme catalyses UDP-N-acetyl-alpha-D-muramoyl-L-alanine + D-glutamate + ATP = UDP-N-acetyl-alpha-D-muramoyl-L-alanyl-D-glutamate + ADP + phosphate + H(+). Its pathway is cell wall biogenesis; peptidoglycan biosynthesis. Functionally, cell wall formation. Catalyzes the addition of glutamate to the nucleotide precursor UDP-N-acetylmuramoyl-L-alanine (UMA). This chain is UDP-N-acetylmuramoylalanine--D-glutamate ligase, found in Burkholderia orbicola (strain MC0-3).